Here is a 336-residue protein sequence, read N- to C-terminus: Phospho-N-acetylmuramoyl-pentapeptide-transferase (336 aa).

10 consecutive transmembrane segments (helical) span residues 3–23 (LTLI…PYFI), 53–73 (GGTV…LFSI), 78–98 (SLAL…IGFL), 118–138 (LALQ…PSGI), 143–163 (VFGY…FWVV), 174–194 (GIDG…GVIA), 200–220 (FDVL…FLFN), 226–246 (VFMG…ISIA), 251–271 (WTLL…MLQV), and 316–336 (AFLW…LYVF).

It belongs to the glycosyltransferase 4 family. MraY subfamily. The cofactor is Mg(2+).

Its subcellular location is the cell membrane. It catalyses the reaction UDP-N-acetyl-alpha-D-muramoyl-L-alanyl-gamma-D-glutamyl-L-lysyl-D-alanyl-D-alanine + di-trans,octa-cis-undecaprenyl phosphate = Mur2Ac(oyl-L-Ala-gamma-D-Glu-L-Lys-D-Ala-D-Ala)-di-trans,octa-cis-undecaprenyl diphosphate + UMP. It participates in cell wall biogenesis; peptidoglycan biosynthesis. Catalyzes the initial step of the lipid cycle reactions in the biosynthesis of the cell wall peptidoglycan: transfers peptidoglycan precursor phospho-MurNAc-pentapeptide from UDP-MurNAc-pentapeptide onto the lipid carrier undecaprenyl phosphate, yielding undecaprenyl-pyrophosphoryl-MurNAc-pentapeptide, known as lipid I. The polypeptide is Phospho-N-acetylmuramoyl-pentapeptide-transferase (Streptococcus pyogenes serotype M6 (strain ATCC BAA-946 / MGAS10394)).